The following is a 191-amino-acid chain: MAVSLVKGGNVSLTKEAPTMNVAMVGLGWDARVTDGQGFDLDASVFAVGEDGKVLSDAHFIFFNNKTSPDGAVEHQGDNRTGEGDGDDEQVKIDLTKVSADIKKLVFAVTIYDAEARKQNFGMVSNSFMRVYNNDNGTEIARFDLSEDASTETAMVFGELYRHGAEWKFKAVGQGFAGGLAALASQHGVNI.

The protein belongs to the CAPAB/TerDEXZ family.

Its function is as follows. Not known; seems to contribute to the tellurium resistance (Ter) mechanism. Also involved in phage inhibition (Phi) and colicin resistance (PacB). This chain is Tellurium resistance protein TerE (terE), found in Serratia marcescens.